The following is a 373-amino-acid chain: Ribonuclease D (373 aa).

The 3'-5' exonuclease domain maps to Y3–E171. Residues R210 to A289 form the HRDC domain.

The protein belongs to the RNase D family. Requires a divalent metal cation as cofactor.

Its subcellular location is the cytoplasm. It carries out the reaction Exonucleolytic cleavage that removes extra residues from the 3'-terminus of tRNA to produce 5'-mononucleotides.. Functionally, exonuclease involved in the 3' processing of various precursor tRNAs. Initiates hydrolysis at the 3'-terminus of an RNA molecule and releases 5'-mononucleotides. The sequence is that of Ribonuclease D from Serratia proteamaculans (strain 568).